The primary structure comprises 188 residues: Inosine triphosphate pyrophosphatase (188 aa).

12-17 (TGNKNK) provides a ligand contact to ITP. Glu40 lines the Mg(2+) pocket. Residues Lys52, 68 to 69 (DT), Lys85, 144 to 147 (FGWD), Lys165, and 170 to 171 (HR) each bind ITP.

This sequence belongs to the HAM1 NTPase family. As to quaternary structure, homodimer. Mg(2+) serves as cofactor. Requires Mn(2+) as cofactor.

It localises to the cytoplasm. The protein localises to the nucleus. The catalysed reaction is ITP + H2O = IMP + diphosphate + H(+). It catalyses the reaction dITP + H2O = dIMP + diphosphate + H(+). The enzyme catalyses XTP + H2O = XMP + diphosphate + H(+). In terms of biological role, pyrophosphatase that hydrolyzes non-canonical purine nucleotides such as inosine triphosphate (ITP), deoxyinosine triphosphate (dITP) or xanthosine 5'-triphosphate (XTP) to their respective monophosphate derivatives. The enzyme does not distinguish between the deoxy- and ribose forms. Probably excludes non-canonical purines from RNA and DNA precursor pools, thus preventing their incorporation into RNA and DNA and avoiding chromosomal lesions. This chain is Inosine triphosphate pyrophosphatase, found in Phaeosphaeria nodorum (strain SN15 / ATCC MYA-4574 / FGSC 10173) (Glume blotch fungus).